We begin with the raw amino-acid sequence, 171 residues long: PRA1-like protein (171 aa).

Helical transmembrane passes span 67–87, 119–139, and 140–160; these read AIIA…LIVI, VILA…ETII, and WLVG…EPPV.

It belongs to the PRA1 family.

It is found in the membrane. This is PRA1-like protein from Schizosaccharomyces pombe (strain 972 / ATCC 24843) (Fission yeast).